A 58-amino-acid chain; its full sequence is Light-harvesting protein B-870 alpha chain (58 aa).

Residues 1-15 lie on the Cytoplasmic side of the membrane; the sequence is MSKFYKIWLVFDPRR. A helical transmembrane segment spans residues 16–36; the sequence is VFVAQGVFLFLLAVLIHLILL. An a bacteriochlorophyll-binding site is contributed by His-32. Residues 37–58 lie on the Periplasmic side of the membrane; sequence STPAFNWLTVATAKHGYVAAAQ.

This sequence belongs to the antenna complex alpha subunit family. The core complex is formed by different alpha and beta chains, binding bacteriochlorophyll molecules, and arranged most probably in tetrameric structures disposed around the reaction center. The non-pigmented gamma chains may constitute additional components.

The protein resides in the cell inner membrane. Its function is as follows. Antenna complexes are light-harvesting systems, which transfer the excitation energy to the reaction centers. The protein is Light-harvesting protein B-870 alpha chain (pufA) of Rhodobacter capsulatus (Rhodopseudomonas capsulata).